The chain runs to 245 residues: Small ribosomal subunit protein uS2 (245 aa).

Belongs to the universal ribosomal protein uS2 family.

The polypeptide is Small ribosomal subunit protein uS2 (Pseudomonas entomophila (strain L48)).